Reading from the N-terminus, the 268-residue chain is Tryptophan synthase alpha chain (268 aa).

Residues E49 and D60 each act as proton acceptor in the active site.

Belongs to the TrpA family. In terms of assembly, tetramer of two alpha and two beta chains.

It catalyses the reaction (1S,2R)-1-C-(indol-3-yl)glycerol 3-phosphate + L-serine = D-glyceraldehyde 3-phosphate + L-tryptophan + H2O. Its pathway is amino-acid biosynthesis; L-tryptophan biosynthesis; L-tryptophan from chorismate: step 5/5. Its function is as follows. The alpha subunit is responsible for the aldol cleavage of indoleglycerol phosphate to indole and glyceraldehyde 3-phosphate. This is Tryptophan synthase alpha chain from Salmonella typhimurium (strain LT2 / SGSC1412 / ATCC 700720).